The chain runs to 157 residues: Ribonuclease H (157 aa).

The RNase H type-1 domain maps to 1-146; sequence MPELFAYTDG…ADALAREGMA (146 aa). Residues D9, E52, D74, and D138 each coordinate Mg(2+).

Belongs to the RNase H family. In terms of assembly, monomer. Mg(2+) serves as cofactor.

The protein localises to the cytoplasm. The enzyme catalyses Endonucleolytic cleavage to 5'-phosphomonoester.. Functionally, endonuclease that specifically degrades the RNA of RNA-DNA hybrids. The polypeptide is Ribonuclease H (Dinoroseobacter shibae (strain DSM 16493 / NCIMB 14021 / DFL 12)).